The chain runs to 173 residues: Interferon gamma (173 aa).

The N-terminal stretch at 1–22 is a signal peptide; the sequence is MNATHCILALQLCLLAISGCSS. The residue at position 23 (glutamine 23) is a Pyrrolidone carboxylic acid. Asparagine 38 and asparagine 105 each carry an N-linked (GlcNAc...) asparagine glycan.

This sequence belongs to the type II (or gamma) interferon family. Homodimer. Interacts with IFNGR1 (via extracellular domain); this interaction promotes IFNGR1 dimerization. As to expression, released primarily from activated T lymphocytes.

It localises to the secreted. Type II interferon produced by immune cells such as T-cells and NK cells that plays crucial roles in antimicrobial, antiviral, and antitumor responses by activating effector immune cells and enhancing antigen presentation. Primarily signals through the JAK-STAT pathway after interaction with its receptor IFNGR1 to affect gene regulation. Upon IFNG binding, IFNGR1 intracellular domain opens out to allow association of downstream signaling components JAK2, JAK1 and STAT1, leading to STAT1 activation, nuclear translocation and transcription of IFNG-regulated genes. Many of the induced genes are transcription factors such as IRF1 that are able to further drive regulation of a next wave of transcription. Plays a role in class I antigen presentation pathway by inducing a replacement of catalytic proteasome subunits with immunoproteasome subunits. In turn, increases the quantity, quality, and repertoire of peptides for class I MHC loading. Increases the efficiency of peptide generation also by inducing the expression of activator PA28 that associates with the proteasome and alters its proteolytic cleavage preference. Up-regulates as well MHC II complexes on the cell surface by promoting expression of several key molecules such as cathepsins B/CTSB, H/CTSH, and L/CTSL. Participates in the regulation of hematopoietic stem cells during development and under homeostatic conditions by affecting their development, quiescence, and differentiation. The sequence is that of Interferon gamma (IFNG) from Meriones unguiculatus (Mongolian jird).